The chain runs to 435 residues: Elongation factor 1-alpha (435 aa).

The tr-type G domain occupies 4 to 227; that stretch reads KPHLNLIVIG…YLDQLELPPK (224 aa). Residues 13–20 form a G1 region; sequence GHIDHGKS. 13-20 lines the GTP pocket; it reads GHIDHGKS. A Mg(2+)-binding site is contributed by serine 20. The segment at 69-73 is G2; it reads GVTIN. The G3 stretch occupies residues 90–93; sequence DAPG. GTP-binding positions include 90 to 94 and 152 to 155; these read DAPGH and NKMD. Residues 152–155 are G4; the sequence is NKMD. The tract at residues 193 to 195 is G5; it reads VAP.

This sequence belongs to the TRAFAC class translation factor GTPase superfamily. Classic translation factor GTPase family. EF-Tu/EF-1A subfamily.

Its subcellular location is the cytoplasm. The enzyme catalyses GTP + H2O = GDP + phosphate + H(+). Functionally, GTP hydrolase that promotes the GTP-dependent binding of aminoacyl-tRNA to the A-site of ribosomes during protein biosynthesis. This Saccharolobus solfataricus (strain ATCC 35092 / DSM 1617 / JCM 11322 / P2) (Sulfolobus solfataricus) protein is Elongation factor 1-alpha.